The sequence spans 341 residues: Dimethylsulfoniopropionate lyase 7 (341 aa).

Basic and acidic residues-rich tracts occupy residues Met1–Glu10 and Glu319–Lys328. Disordered stretches follow at residues Met1–Phe24 and Glu319–Ala341.

The protein belongs to the aspartate/glutamate racemases family. ALMA1 subfamily. As to quaternary structure, homotetramer.

It catalyses the reaction S,S-dimethyl-beta-propiothetin = acrylate + dimethyl sulfide + H(+). Functionally, mediates cleavage of dimethylsulfoniopropionate (DMSP) into dimethyl sulfide (DMS) and acrylate. DMS is the principal form by which sulfur is transported from oceans to the atmosphere and is a key component of the ocean sulfur cycle. This Emiliania huxleyi (strain CCMP1516) protein is Dimethylsulfoniopropionate lyase 7.